A 203-amino-acid polypeptide reads, in one-letter code: Pro-FMRFamide-related neuropeptide VF (203 aa).

The first 26 residues, 1–26, serve as a signal peptide directing secretion; the sequence is MEIISSKRFILLTLATSSFLTSNTLC. Residues 27-57 constitute a propeptide that is removed on maturation; it reads SDELMMPHFHSKEGYGKYYQLRGIPKGVKER. Position 94 is a phenylalanine amide (F94). Positions 97–106 are excised as a propeptide; sequence NIEDRRSPRA. Phenylalanine amide is present on F125. A propeptide spanning residues 128–203 is cleaved from the precursor; sequence TTARRITKTL…QPVLQGAMKL (76 aa). The interval 161-186 is disordered; the sequence is HQEIQSPGQEQPRKRVFTETDDAERK. The segment covering 171-186 has biased composition (basic and acidic residues); sequence QPRKRVFTETDDAERK.

Belongs to the FARP (FMRFamide related peptide) family. In terms of tissue distribution, isoform 1 is expressed at high levels in the hypothalamus and eye. Isoform 2 is specifically expressed in a region between the dorsomedial hypothalamic and ventromedial hypothalamic nuclei.

It is found in the secreted. Its function is as follows. Efficiently inhibits forskolin-induced production of cAMP. Acts as a potent negative regulator of gonadotropin synthesis and secretion. Induces secretion of prolactin. Efficiently inhibits forskolin-induced production of cAMP. Blocks morphine-induced analgesia. The chain is Pro-FMRFamide-related neuropeptide VF (Npvf) from Rattus norvegicus (Rat).